The sequence spans 271 residues: Type III pantothenate kinase (271 aa).

Residue Asp6–Val13 coordinates ATP. Residue Gly109 to Arg112 participates in substrate binding. Catalysis depends on Asp111, which acts as the Proton acceptor. Asp131 provides a ligand contact to K(+). Ser134 serves as a coordination point for ATP. Substrate is bound at residue Thr186.

The protein belongs to the type III pantothenate kinase family. In terms of assembly, homodimer. Requires NH4(+) as cofactor. The cofactor is K(+).

Its subcellular location is the cytoplasm. The enzyme catalyses (R)-pantothenate + ATP = (R)-4'-phosphopantothenate + ADP + H(+). It participates in cofactor biosynthesis; coenzyme A biosynthesis; CoA from (R)-pantothenate: step 1/5. Its function is as follows. Catalyzes the phosphorylation of pantothenate (Pan), the first step in CoA biosynthesis. In Mycobacteroides abscessus (strain ATCC 19977 / DSM 44196 / CCUG 20993 / CIP 104536 / JCM 13569 / NCTC 13031 / TMC 1543 / L948) (Mycobacterium abscessus), this protein is Type III pantothenate kinase.